The primary structure comprises 620 residues: Preterminal protein (620 aa).

The Nuclear localization signal signature appears at 356–365 (RLPMRRRRRR). Ser-545 bears the O-(5'-phospho-DNA)-serine mark.

This sequence belongs to the adenoviridae terminal protein family. Heterodimer with the polymerase; this heterodimer binds to bp 9 to 18 of the genome. Interacts with host POU2F1; POU2F1 binds to the auxiliary sequences in the inverted terminal repeats and tethers the pTP-POL heterodimer to the origin DNA thereby participating in the assembly of the pre-initiation complex (POL-TP-DBP-NFIA-POU2F1). In terms of processing, preterminal protein is used to replicate viral genome, upon genomic encapsidation it is processed first into iTP and finally into TP by adenovirus protease.

The protein resides in the host nucleus matrix. In terms of biological role, protein covalently bound to the viral DNA that acts as a primer for viral genomic replication by DNA strand displacement. Assembles on the viral origin of replication in an initiation complex with viral polymerase, DBP, host NFIA and host POU2F1/OCT1. During initiation, the polymerase covalently couples the first dCTP with Ser-580 of pTP. The terminal protein stimulates the template activity over 20 fold compared to protein-free templates. Neo-synthesized viral genomes are linked to two preterminal proteins, one for each 5' end. These new genomes are encapsidated in the nucleus, and during capsid maturation by viral protease, preterminal protein is first cleaved into intermediary (iTP), then into mature TP. May play a role in host nuclear matrix localization of genomic DNA. In Bovine adenovirus 2 (BAdV-2), this protein is Preterminal protein.